Reading from the N-terminus, the 229-residue chain is Transcriptional activator protein YukR (229 aa).

Residues 157-222 form the HTH luxR-type domain; the sequence is DTSGKGILSP…QAIRLGVELE (66 aa). The segment at residues 181–200 is a DNA-binding region (H-T-H motif); sequence YPEIALIAGITTRTVKHHMG.

Belongs to the autoinducer-regulated transcriptional regulatory protein family.

In terms of biological role, probable transcriptional activator. Binds to an autoinducer molecule. The polypeptide is Transcriptional activator protein YukR (yukR) (Yersinia ruckeri).